We begin with the raw amino-acid sequence, 880 residues long: DNA mismatch repair protein MutS (880 aa).

625–632 (GPNMAGKS) provides a ligand contact to ATP.

It belongs to the DNA mismatch repair MutS family.

Its function is as follows. This protein is involved in the repair of mismatches in DNA. It is possible that it carries out the mismatch recognition step. This protein has a weak ATPase activity. In Alkaliphilus oremlandii (strain OhILAs) (Clostridium oremlandii (strain OhILAs)), this protein is DNA mismatch repair protein MutS.